Consider the following 160-residue polypeptide: Ribonuclease H (160 aa).

Residues 1 to 157 form the RNase H type-1 domain; that stretch reads MNIEIYTDGA…CDRLAVEACQ (157 aa). 4 residues coordinate Mg(2+): D8, E49, D85, and D149.

Belongs to the RNase H family. As to quaternary structure, monomer. Requires Mg(2+) as cofactor.

It localises to the cytoplasm. The enzyme catalyses Endonucleolytic cleavage to 5'-phosphomonoester.. Its function is as follows. Endonuclease that specifically degrades the RNA of RNA-DNA hybrids. In Treponema denticola (strain ATCC 35405 / DSM 14222 / CIP 103919 / JCM 8153 / KCTC 15104), this protein is Ribonuclease H.